A 581-amino-acid chain; its full sequence is Prolactin receptor (581 aa).

Positions 1 to 24 (MKENVASRAVFILLLFLNASLLNG) are cleaved as a signal peptide. The Extracellular segment spans residues 25–234 (QSPPGKPKII…QIPNDFPVND (210 aa)). Fibronectin type-III domains follow at residues 27–127 (PPGK…IVEP) and 129–229 (PPAN…IPND). A disulfide bridge links Cys36 with Cys46. N-linked (GlcNAc...) asparagine glycosylation is present at Asn59. Cysteines 75 and 86 form a disulfide. The N-linked (GlcNAc...) asparagine glycan is linked to Asn132. Residues Asp211 and His212 each contribute to the Zn(2+) site. The WSXWS motif motif lies at 215-219 (WSEWS). Asn233 carries an N-linked (GlcNAc...) asparagine glycan. A helical transmembrane segment spans residues 235–258 (TTVWIFVAVLSAVICLIMVWAVAL). The Cytoplasmic portion of the chain corresponds to 259-581 (KGYSMMTCIL…PAKEAPPALP (323 aa)). Positions 267–275 (ILPPVPGPK) match the Box 1 motif motif. 2 disordered regions span residues 321-362 (EDQQ…LFSE) and 462-502 (LKPS…QDKT). Basic and acidic residues predominate over residues 329-349 (PSKEHMEQGVKPMHMDPDSDS).

Belongs to the type I cytokine receptor family. Type 1 subfamily. As to quaternary structure, interacts with SMARCA1. Interacts with NEK3 and VAV2 and this interaction is prolactin-dependent.

The protein localises to the membrane. This is a receptor for the anterior pituitary hormone prolactin. This Cervus elaphus (Red deer) protein is Prolactin receptor (PRLR).